A 328-amino-acid chain; its full sequence is Malate dehydrogenase (328 aa).

An NAD(+)-binding site is contributed by 12-18 (GAAGQIG). Substrate contacts are provided by arginine 95 and arginine 101. NAD(+) is bound by residues asparagine 108, glutamine 115, and 132–134 (VGN). Asparagine 134 and arginine 165 together coordinate substrate. Histidine 190 acts as the Proton acceptor in catalysis.

It belongs to the LDH/MDH superfamily. MDH type 2 family.

It catalyses the reaction (S)-malate + NAD(+) = oxaloacetate + NADH + H(+). Its function is as follows. Catalyzes the reversible oxidation of malate to oxaloacetate. The chain is Malate dehydrogenase from Acidovorax ebreus (strain TPSY) (Diaphorobacter sp. (strain TPSY)).